Here is a 208-residue protein sequence, read N- to C-terminus: Probable GTP-binding protein EngB (208 aa).

The 183-residue stretch at 23–205 folds into the EngB-type G domain; sequence LTSEMVILGR…RQTLLKYLLT (183 aa). Residues 31–38, 57–61, 84–87, 154–157, and 182–184 each bind GTP; these read GRSNVGKS, GKTRL, DLPG, TKFD, and FNA. 2 residues coordinate Mg(2+): Ser38 and Thr59.

The protein belongs to the TRAFAC class TrmE-Era-EngA-EngB-Septin-like GTPase superfamily. EngB GTPase family. It depends on Mg(2+) as a cofactor.

Functionally, necessary for normal cell division and for the maintenance of normal septation. This chain is Probable GTP-binding protein EngB, found in Helicobacter pylori (strain HPAG1).